The sequence spans 218 residues: Transaldolase (218 aa).

The active-site Schiff-base intermediate with substrate is Lys83.

Belongs to the transaldolase family. Type 3B subfamily.

It localises to the cytoplasm. The catalysed reaction is D-sedoheptulose 7-phosphate + D-glyceraldehyde 3-phosphate = D-erythrose 4-phosphate + beta-D-fructose 6-phosphate. Its pathway is carbohydrate degradation; pentose phosphate pathway; D-glyceraldehyde 3-phosphate and beta-D-fructose 6-phosphate from D-ribose 5-phosphate and D-xylulose 5-phosphate (non-oxidative stage): step 2/3. Transaldolase is important for the balance of metabolites in the pentose-phosphate pathway. Does not show fructose-6-P aldolase activity. The chain is Transaldolase (tal) from Thermotoga maritima (strain ATCC 43589 / DSM 3109 / JCM 10099 / NBRC 100826 / MSB8).